A 296-amino-acid chain; its full sequence is Phosphatidylglycerol--prolipoprotein diacylglyceryl transferase (296 aa).

Transmembrane regions (helical) follow at residues 17–37 (LAVR…IVVG), 59–79 (MMFY…VLFY), 97–117 (GGMS…LFAW), 129–149 (FVAP…FING), 204–224 (SQLY…FLFA), 230–250 (MGAI…TVEF), and 257–277 (FLGL…PMIL). An a 1,2-diacyl-sn-glycero-3-phospho-(1'-sn-glycerol)-binding site is contributed by arginine 142.

This sequence belongs to the Lgt family.

The protein localises to the cell inner membrane. The enzyme catalyses L-cysteinyl-[prolipoprotein] + a 1,2-diacyl-sn-glycero-3-phospho-(1'-sn-glycerol) = an S-1,2-diacyl-sn-glyceryl-L-cysteinyl-[prolipoprotein] + sn-glycerol 1-phosphate + H(+). It participates in protein modification; lipoprotein biosynthesis (diacylglyceryl transfer). Its function is as follows. Catalyzes the transfer of the diacylglyceryl group from phosphatidylglycerol to the sulfhydryl group of the N-terminal cysteine of a prolipoprotein, the first step in the formation of mature lipoproteins. This chain is Phosphatidylglycerol--prolipoprotein diacylglyceryl transferase, found in Burkholderia cenocepacia (strain HI2424).